A 201-amino-acid polypeptide reads, in one-letter code: 3-isopropylmalate dehydratase small subunit (201 aa).

This sequence belongs to the LeuD family. LeuD type 1 subfamily. As to quaternary structure, heterodimer of LeuC and LeuD.

The catalysed reaction is (2R,3S)-3-isopropylmalate = (2S)-2-isopropylmalate. It functions in the pathway amino-acid biosynthesis; L-leucine biosynthesis; L-leucine from 3-methyl-2-oxobutanoate: step 2/4. In terms of biological role, catalyzes the isomerization between 2-isopropylmalate and 3-isopropylmalate, via the formation of 2-isopropylmaleate. The chain is 3-isopropylmalate dehydratase small subunit from Escherichia coli O9:H4 (strain HS).